The following is a 20-amino-acid chain: Protein PR-L2 (20 aa).

The disordered stretch occupies residues 1 to 20 (SVFAFENEQSSTIAPARLYK).

This sequence belongs to the BetVI family.

The protein is Protein PR-L2 of Lupinus luteus (European yellow lupine).